Reading from the N-terminus, the 1423-residue chain is DNA-directed RNA polymerase subunit beta' (1423 aa).

Positions 71, 73, 86, and 89 each coordinate Zn(2+). The Mg(2+) site is built by D461, D463, and D465. Positions 815, 889, 896, and 899 each coordinate Zn(2+).

The protein belongs to the RNA polymerase beta' chain family. In terms of assembly, the RNAP catalytic core consists of 2 alpha, 1 beta, 1 beta' and 1 omega subunit. When a sigma factor is associated with the core the holoenzyme is formed, which can initiate transcription. Requires Mg(2+) as cofactor. Zn(2+) serves as cofactor.

It carries out the reaction RNA(n) + a ribonucleoside 5'-triphosphate = RNA(n+1) + diphosphate. Functionally, DNA-dependent RNA polymerase catalyzes the transcription of DNA into RNA using the four ribonucleoside triphosphates as substrates. The sequence is that of DNA-directed RNA polymerase subunit beta' from Actinobacillus pleuropneumoniae serotype 3 (strain JL03).